A 110-amino-acid chain; its full sequence is Putative pterin-4-alpha-carbinolamine dehydratase (110 aa).

The protein belongs to the pterin-4-alpha-carbinolamine dehydratase family.

The enzyme catalyses (4aS,6R)-4a-hydroxy-L-erythro-5,6,7,8-tetrahydrobiopterin = (6R)-L-erythro-6,7-dihydrobiopterin + H2O. This chain is Putative pterin-4-alpha-carbinolamine dehydratase, found in Vibrio vulnificus (strain CMCP6).